The chain runs to 132 residues: MFRERIIVQDSLVADESGSAFRIRLPWYRALPLSTIEELSVTVDGTAFDPARLRIAVNDGEWALAEAQLRTDDVWFVLDDATVRLPGLVLDAGAHEVQATLSMRIPYLPVAGKPLSMAETDQKRMDVKELTA.

This sequence belongs to the C-glycoside deglycosidase beta subunit family. In terms of assembly, heterodimer composed of an alpha subunit (CarB) and a beta subunit (CarC). Mg(2+) serves as cofactor.

It carries out the reaction 3'-dehydrocarminate + H(+) = kermesate + 1,5-anhydro-D-erythro-hex-1-en-3-ulose. With respect to regulation, activity is strongly reduced in the presence of chelating agents. Carbon-carbon bond-cleaving enzyme which participates in a carminate degradation pathway. Cleaves the C-C bond in 3'-dehydrocarminate to form kermesate. Also shows weak activity with other C-glycosides, such as 3''-dehydropuerarin (3''-oxo-puerarin), 3''-dehydroisoorientin (3''-oxo-homoorientin) and 3'-dehydromangiferin (3'-oxo-mangiferin). This Microbacterium sp protein is 3'-dehydrocarminate deglycosidase beta subunit.